The sequence spans 420 residues: Glutamyl-tRNA reductase (420 aa).

Substrate is bound by residues 49–52 (TCNR), S110, 115–117 (EHQ), and Q121. C50 functions as the Nucleophile in the catalytic mechanism. 190 to 195 (GSGTIN) is an NADP(+) binding site.

It belongs to the glutamyl-tRNA reductase family. Homodimer.

It catalyses the reaction (S)-4-amino-5-oxopentanoate + tRNA(Glu) + NADP(+) = L-glutamyl-tRNA(Glu) + NADPH + H(+). The protein operates within porphyrin-containing compound metabolism; protoporphyrin-IX biosynthesis; 5-aminolevulinate from L-glutamyl-tRNA(Glu): step 1/2. Catalyzes the NADPH-dependent reduction of glutamyl-tRNA(Glu) to glutamate 1-semialdehyde (GSA). In Wigglesworthia glossinidia brevipalpis, this protein is Glutamyl-tRNA reductase.